A 279-amino-acid chain; its full sequence is Fatty acid metabolism regulator protein (279 aa).

The HTH gntR-type domain occupies lysine 6–phenylalanine 74. Positions glutamate 34–glutamine 53 form a DNA-binding region, H-T-H motif.

As to quaternary structure, homodimer.

It is found in the cytoplasm. Multifunctional regulator of fatty acid metabolism. The sequence is that of Fatty acid metabolism regulator protein from Vibrio parahaemolyticus serotype O3:K6 (strain RIMD 2210633).